Consider the following 334-residue polypeptide: MGMKKSRPRRGSLAFSPRKRAKKLVPKIRSWPADKKVGLQAFPVYKAGTTHALLIENNPKSPNNGQEVFTPVTVLETPDVTVAGIRLYEKTTKGLKALTEVWAEQLDNDLGRKLTLVKKEEKKTADALDAVLEKATEVRVIVHTNPKTTGIPKKKPEVVEIRIGGSSVAERLAYAKEILGKTLAISDVFEAGEIIDTLAITKGKGFQGSVKRWGIKVQFGKHQRKGVGRHTGSIGPWRPRRVMWTVPLPGQMGFHQRTEYNKRILKLGSEGAEITPKGGFLNYGAVKNGYVVVKGTVQGPAKRLVVLRGSVRAAEDKFGLPEVAYISTESKQGN.

The span at 1–10 (MGMKKSRPRR) shows a compositional bias: basic residues. The segment at 1 to 20 (MGMKKSRPRRGSLAFSPRKR) is disordered.

This sequence belongs to the universal ribosomal protein uL3 family. As to quaternary structure, part of the 50S ribosomal subunit. Forms a cluster with proteins L14 and L24e.

In terms of biological role, one of the primary rRNA binding proteins, it binds directly near the 3'-end of the 23S rRNA, where it nucleates assembly of the 50S subunit. The protein is Large ribosomal subunit protein uL3 of Methanococcus maripaludis (strain C7 / ATCC BAA-1331).